A 212-amino-acid polypeptide reads, in one-letter code: Pyridoxine/pyridoxamine 5'-phosphate oxidase (212 aa).

Substrate is bound by residues 7 to 10 (RREY) and lysine 66. Residues 61-66 (RIVLLK), 76-77 (YT), arginine 82, lysine 83, and glutamine 105 contribute to the FMN site. Substrate contacts are provided by tyrosine 123, arginine 127, and serine 131. FMN is bound by residues 140–141 (QS) and tryptophan 185. 191–193 (RLH) is a binding site for substrate. Arginine 195 contacts FMN.

Belongs to the pyridoxamine 5'-phosphate oxidase family. As to quaternary structure, homodimer. It depends on FMN as a cofactor.

The catalysed reaction is pyridoxamine 5'-phosphate + O2 + H2O = pyridoxal 5'-phosphate + H2O2 + NH4(+). It carries out the reaction pyridoxine 5'-phosphate + O2 = pyridoxal 5'-phosphate + H2O2. It functions in the pathway cofactor metabolism; pyridoxal 5'-phosphate salvage; pyridoxal 5'-phosphate from pyridoxamine 5'-phosphate: step 1/1. The protein operates within cofactor metabolism; pyridoxal 5'-phosphate salvage; pyridoxal 5'-phosphate from pyridoxine 5'-phosphate: step 1/1. Its function is as follows. Catalyzes the oxidation of either pyridoxine 5'-phosphate (PNP) or pyridoxamine 5'-phosphate (PMP) into pyridoxal 5'-phosphate (PLP). In Hahella chejuensis (strain KCTC 2396), this protein is Pyridoxine/pyridoxamine 5'-phosphate oxidase.